Consider the following 273-residue polypeptide: Testis-specific serine/threonine-protein kinase 6 (273 aa).

In terms of domain architecture, Protein kinase spans 12-267 (YKLGRTIGEG…AGQVARNCWL (256 aa)). ATP-binding positions include 18-26 (IGEGSYSKV) and K41. D135 acts as the Proton acceptor in catalysis.

It belongs to the protein kinase superfamily. CAMK Ser/Thr protein kinase family. In terms of assembly, microtubule inner protein component of sperm flagellar doublet microtubules. Interacts with HSP90; this interaction stabilizes and activates TSSK6. Interacts with the heat shock proteins HSPCB, HSPA8 and HSPA1A. These interactions appear to be required for TSSK6 kinase activity. Interacts with TSACC; this interaction is direct and recruits TSACC to HSP90, which is essential for kinase activity. The cofactor is Mg(2+). Post-translationally, autophosphorylated. In terms of processing, ubiquitinated; HSP90 activity negatively regulates ubiquitination and degradation. As to expression, highly expressed in testis. Expressed at lower levels in colon, small intestine, ovary, prostate, thymus, spleen and peripheral blood leukocytes.

It is found in the cytoplasm. Its subcellular location is the cytoskeleton. The protein resides in the flagellum axoneme. The protein localises to the nucleus. It carries out the reaction L-seryl-[protein] + ATP = O-phospho-L-seryl-[protein] + ADP + H(+). It catalyses the reaction L-threonyl-[protein] + ATP = O-phospho-L-threonyl-[protein] + ADP + H(+). In terms of biological role, serine/threonine-protein kinase component of the sperm flagellar doublet microtubules. May act as a regulator of sperm motility by mediating phosphorylation of sperm doublet microtubule proteins. Plays a role in DNA condensation during postmeiotic chromatin remodeling and histone-to-protamine transition during spermatogenesis. This Homo sapiens (Human) protein is Testis-specific serine/threonine-protein kinase 6.